The sequence spans 205 residues: Putative 3-methyladenine DNA glycosylase (205 aa).

It belongs to the DNA glycosylase MPG family.

The sequence is that of Putative 3-methyladenine DNA glycosylase from Bacillus cereus (strain ZK / E33L).